We begin with the raw amino-acid sequence, 721 residues long: uncharacterized protein (721 aa).

Disordered regions lie at residues 196–291 (TSMT…VGGP) and 370–513 (AGIP…AAEQ). Low complexity-rich tracts occupy residues 202–224 (SPAG…TSGP) and 232–250 (SPFG…SSGP). Pro residues-rich tracts occupy residues 264–283 (PMPP…PPSA) and 379–389 (APTPSPAPIAP). Residues 419-429 (APAGPLPAYGA) are compositionally biased toward low complexity. Residues 435-446 (VTTPPATPPTPT) are compositionally biased toward pro residues. The span at 470 to 484 (VNKSTAPATTQAQPS) shows a compositional bias: polar residues. Positions 491 to 505 (ASATAAATTGAAAGD) are enriched in low complexity.

This is an uncharacterized protein from Mycobacterium tuberculosis (strain ATCC 25618 / H37Rv).